Reading from the N-terminus, the 875-residue chain is Leucine--tRNA ligase (875 aa).

A 'HIGH' region motif is present at residues 43–53 (PYPSGRIHIGH). Positions 631-635 (KMSKS) match the 'KMSKS' region motif. Lysine 634 serves as a coordination point for ATP.

The protein belongs to the class-I aminoacyl-tRNA synthetase family.

The protein localises to the cytoplasm. It catalyses the reaction tRNA(Leu) + L-leucine + ATP = L-leucyl-tRNA(Leu) + AMP + diphosphate. The chain is Leucine--tRNA ligase from Mesorhizobium japonicum (strain LMG 29417 / CECT 9101 / MAFF 303099) (Mesorhizobium loti (strain MAFF 303099)).